Reading from the N-terminus, the 525-residue chain is G patch domain-containing protein 3 (525 aa).

Disordered regions lie at residues 54-85 (ERGP…PASD) and 246-317 (EQEE…QERT). Residues 274-299 (DEPEDEGQQQEEEEESGSEEDDDRGE) show a composition bias toward acidic residues. Basic and acidic residues predominate over residues 300–317 (EWERHEALHEDVTGQERT). Residues 411-459 (TKGIGRKVMERQGWAEGQGLGSRCSGVPEALDGDGQHPRCKRGLGYHGE) form the G-patch domain.

In terms of assembly, interacts with mitochondrial MAVS; the interaction is markedly increased upon viral infection.

The protein localises to the nucleus. Its subcellular location is the cytoplasm. Involved in transcriptional regulation. It is able to activate transcription from CXCR4 promoter and therefore it might control neural crest cell migration involved in ocular and craniofacial development. Is a negative regulator of immune antiviral response, acting via down-regulation of RIG-I-like receptors signaling and inhibition of type I interferon production. The control mechanism involves interaction with mitochondrial MAVS and inhibition of MAVS assembly with downstream proteins implicated in antiviral response, such as TBK1 and TRAF6. In Mus musculus (Mouse), this protein is G patch domain-containing protein 3 (Gpatch3).